A 108-amino-acid chain; its full sequence is L-rhamnose mutarotase (108 aa).

Tyr-19 provides a ligand contact to substrate. His-23 (proton donor) is an active-site residue. Residues Tyr-45 and 80–81 contribute to the substrate site; that span reads WW.

This sequence belongs to the rhamnose mutarotase family. In terms of assembly, homodimer.

It is found in the cytoplasm. It catalyses the reaction alpha-L-rhamnose = beta-L-rhamnose. Its pathway is carbohydrate metabolism; L-rhamnose metabolism. Involved in the anomeric conversion of L-rhamnose. The sequence is that of L-rhamnose mutarotase from Ligilactobacillus salivarius (strain UCC118) (Lactobacillus salivarius).